We begin with the raw amino-acid sequence, 303 residues long: Probable 5-dehydro-4-deoxyglucarate dehydratase (303 aa).

It belongs to the DapA family.

The enzyme catalyses 5-dehydro-4-deoxy-D-glucarate + H(+) = 2,5-dioxopentanoate + CO2 + H2O. The protein operates within carbohydrate acid metabolism; D-glucarate degradation; 2,5-dioxopentanoate from D-glucarate: step 2/2. In Pseudomonas putida (strain GB-1), this protein is Probable 5-dehydro-4-deoxyglucarate dehydratase.